The sequence spans 385 residues: 8-amino-7-oxononanoate synthase (385 aa).

Arg21 is a substrate binding site. 108 to 109 (GF) contributes to the pyridoxal 5'-phosphate binding site. Position 133 (His133) interacts with substrate. Pyridoxal 5'-phosphate contacts are provided by Ser179, His207, and Thr233. An N6-(pyridoxal phosphate)lysine modification is found at Lys236. A substrate-binding site is contributed by Thr352.

This sequence belongs to the class-II pyridoxal-phosphate-dependent aminotransferase family. BioF subfamily. Homodimer. Pyridoxal 5'-phosphate serves as cofactor.

The enzyme catalyses 6-carboxyhexanoyl-[ACP] + L-alanine + H(+) = (8S)-8-amino-7-oxononanoate + holo-[ACP] + CO2. The protein operates within cofactor biosynthesis; biotin biosynthesis. Catalyzes the decarboxylative condensation of pimeloyl-[acyl-carrier protein] and L-alanine to produce 8-amino-7-oxononanoate (AON), [acyl-carrier protein], and carbon dioxide. This chain is 8-amino-7-oxononanoate synthase, found in Klebsiella pneumoniae (strain 342).